We begin with the raw amino-acid sequence, 296 residues long: Porphobilinogen deaminase (296 aa).

The residue at position 232 (Cys-232) is an S-(dipyrrolylmethanemethyl)cysteine.

Belongs to the HMBS family. In terms of assembly, monomer. The cofactor is dipyrromethane.

The enzyme catalyses 4 porphobilinogen + H2O = hydroxymethylbilane + 4 NH4(+). Its pathway is porphyrin-containing compound metabolism; protoporphyrin-IX biosynthesis; coproporphyrinogen-III from 5-aminolevulinate: step 2/4. Its function is as follows. Tetrapolymerization of the monopyrrole PBG into the hydroxymethylbilane pre-uroporphyrinogen in several discrete steps. This Corynebacterium aurimucosum (strain ATCC 700975 / DSM 44827 / CIP 107346 / CN-1) (Corynebacterium nigricans) protein is Porphobilinogen deaminase.